A 172-amino-acid chain; its full sequence is Ribosome maturation factor RimM (172 aa).

The PRC barrel domain maps to 96–168; it reads EGEFYYHQII…RVDVELMEGL (73 aa).

This sequence belongs to the RimM family. In terms of assembly, binds ribosomal protein uS19.

It is found in the cytoplasm. An accessory protein needed during the final step in the assembly of 30S ribosomal subunit, possibly for assembly of the head region. Essential for efficient processing of 16S rRNA. May be needed both before and after RbfA during the maturation of 16S rRNA. It has affinity for free ribosomal 30S subunits but not for 70S ribosomes. In Streptococcus pyogenes serotype M6 (strain ATCC BAA-946 / MGAS10394), this protein is Ribosome maturation factor RimM.